The sequence spans 3704 residues: Fatty acid synthase 2 (3704 aa).

A compositionally biased stretch (low complexity) spans Ala27–Gly41. Positions Ala27–Thr52 are disordered. An acetyltransferase (AT) domain region spans residues Ala216–Lys475. Positions Ser639–Asp887 are enoyl reductase (ER) domain. Residues Gly1216–Leu1709 are dehydratase (DH) domain. The MaoC-like domain occupies Pro1624–Gly1730. Residues Tyr1747–Ser2112 are malonyl/palmitoyl transferase (MT/PT) domain. Residues Asp2265–Glu2343 enclose the Carrier domain. Ser2303 carries the O-(pantetheine 4'-phosphoryl)serine modification. The tract at residues Gly2733–Ser2969 is ketoreductase (KR) domain. The Ketosynthase family 3 (KS3) domain occupies Gln3176–His3623. Catalysis depends on for beta-ketoacyl synthase activity residues Cys3359, His3506, and His3547.

This sequence in the N-terminal section; belongs to the fungal fatty acid synthetase subunit beta family. The protein in the C-terminal section; belongs to the thiolase-like superfamily. Fungal fatty acid synthetase subunit alpha family.

It functions in the pathway secondary metabolite biosynthesis. Its function is as follows. Fatty acid synthase; part of the gene cluster that mediates the biosynthesis of the glycolipid biosurfactant ustilagic acid (UA). UA is a secreted cellobiose glycolipid that is toxic for many microorganisms and confers biocontrol activity to U.maydis. UA consists of 15,16-dihydroxypalmitic or 2,15,16-trihydroxypalmitic acid, which is O-glycosidically linked to cellobiose at its terminal hydroxyl group. In addition, the cellobiose moiety is acetylated and acylated with a short-chain hydroxy fatty acid. UA biosynthesis starts with omega-hydroxylation of palmitic acid catalyzed by the cytochrome P450 monooxygenase cyp1. Terminal hydroxylation of palmitic acid precedes subterminal hydroxylation catalyzed by the cytochrome P450 monooxygenase cyp2. Sequential glucosylation of the hydroxy fatty acid is probably catalyzed by the glycosyltransferase ugt1. The cellobiose lipid is further decorated by acetylation of the proximal glucose residue and by acylation with a short-chain beta-hydroxy fatty acid at the distal glucose residue. The acyltransferase uat1 may be a good candidate for catalyzing either acetylation or acylation of the cellobiose lipid. The fatty acid synthase fas2 may be involved in synthesis of the carbon backbone of the short-chain beta-hydroxy fatty acid esterified to the cellobiose disaccharide. The secreted UA consists of a mixture of both alpha-hydroxylated and non-hydroxylated glycolipids; therefore, alpha-hydroxylation of the long-chain fatty, catalyzed by the fatty acid hydroxylase ahd1, occurs late in UA biosynthesis and may be the last step before secretion. This Mycosarcoma maydis (Corn smut fungus) protein is Fatty acid synthase 2.